Reading from the N-terminus, the 471-residue chain is Nuclear receptor subfamily 0 group B member 1 (471 aa).

3 tandem repeats follow at residues 1–67, 68–134, and 135–201. The 4 X 67 AA tandem repeats stretch occupies residues 1-253; it reads MAGEDHQWQG…QRVALKSPQV (253 aa). 3 consecutive short sequence motifs (LXXLL motif) follow at residues 13 to 17, 80 to 84, and 147 to 151; these read LYNML and LYSLL. The 4; truncated repeat unit spans residues 202-253; that stretch reads FCGEDHPRQSGILCNMPMSAKQTHVAPEAQPGAPWWDPSCAAQRVALKSPQV. The NR LBD domain maps to 210 to 470; sequence QSGILCNMPM…DMMLEMLCAK (261 aa). Residues 462 to 467 carry the AF-2 motif motif; it reads MMLEML.

This sequence belongs to the nuclear hormone receptor family. NR0 subfamily. As to quaternary structure, homodimer. Interacts with NR5A1, NR5A2, NR0B2 and with COPS2. Interacts with ESRRB; represses ESRRB activity at the GATA6 promoter.

The protein localises to the nucleus. The protein resides in the cytoplasm. In terms of biological role, nuclear receptor that lacks a DNA-binding domain and acts as a corepressor that inhibits the transcriptional activity of other nuclear receptors through heterodimeric interactions. Component of a cascade required for the development of the hypothalamic-pituitary-adrenal-gonadal axis. May also have a role in the development of the embryo and in the maintenance of embryonic stem cell pluripotency. The chain is Nuclear receptor subfamily 0 group B member 1 (NR0B1) from Sus scrofa (Pig).